Consider the following 230-residue polypeptide: Heptaprenylglyceryl phosphate synthase (230 aa).

Sn-glycerol 1-phosphate is bound at residue lysine 12. 2 residues coordinate Mg(2+): aspartate 14 and threonine 40. Sn-glycerol 1-phosphate-binding positions include 159–164 (YIEYSG), glycine 189, and 209–210 (GD).

This sequence belongs to the GGGP/HepGP synthase family. Group I subfamily. In terms of assembly, homodimer. Mg(2+) is required as a cofactor.

It catalyses the reaction sn-glycerol 1-phosphate + all-trans-heptaprenyl diphosphate = 3-heptaprenyl-sn-glycero-1-phosphate + diphosphate. It functions in the pathway membrane lipid metabolism; glycerophospholipid metabolism. Its function is as follows. Prenyltransferase that catalyzes in vivo the transfer of the heptaprenyl moiety of heptaprenyl pyrophosphate (HepPP; 35 carbon atoms) to the C3 hydroxyl of sn-glycerol-1-phosphate (G1P), producing heptaprenylglyceryl phosphate (HepGP). This reaction is an ether-bond-formation step in the biosynthesis of archaea-type G1P-based membrane lipids found in Bacillales. To a much lesser extent, is also able to use geranylgeranyl diphosphate (GGPP; C20) as the prenyl donor. This chain is Heptaprenylglyceryl phosphate synthase, found in Staphylococcus aureus (strain NCTC 8325 / PS 47).